Reading from the N-terminus, the 199-residue chain is MIGCLIGEVFALEAPTVLLNVNGVGYEIDTPLSTFCQLQKGQKVTLWTHLVVREDAQQLYGFSDAQEKTIFRTLLKVNGVGPKMALGILSTLSVELLVHTIEHDDVNTLVKVPGVGKKTAERLMIELRDRFKTLAQGTSSAAALPQIQFVSNSPVAEAEAALQSLGYKPLEAQKAVAAVKADYTESADIIRAALKSMMK.

The domain I stretch occupies residues 1–63 (MIGCLIGEVF…EDAQQLYGFS (63 aa)). Residues 64–142 (DAQEKTIFRT…TLAQGTSSAA (79 aa)) are domain II. The segment at 143–150 (ALPQIQFV) is flexible linker. A domain III region spans residues 150 to 199 (VSNSPVAEAEAALQSLGYKPLEAQKAVAAVKADYTESADIIRAALKSMMK).

The protein belongs to the RuvA family. Homotetramer. Forms an RuvA(8)-RuvB(12)-Holliday junction (HJ) complex. HJ DNA is sandwiched between 2 RuvA tetramers; dsDNA enters through RuvA and exits via RuvB. An RuvB hexamer assembles on each DNA strand where it exits the tetramer. Each RuvB hexamer is contacted by two RuvA subunits (via domain III) on 2 adjacent RuvB subunits; this complex drives branch migration. In the full resolvosome a probable DNA-RuvA(4)-RuvB(12)-RuvC(2) complex forms which resolves the HJ.

It is found in the cytoplasm. Its function is as follows. The RuvA-RuvB-RuvC complex processes Holliday junction (HJ) DNA during genetic recombination and DNA repair, while the RuvA-RuvB complex plays an important role in the rescue of blocked DNA replication forks via replication fork reversal (RFR). RuvA specifically binds to HJ cruciform DNA, conferring on it an open structure. The RuvB hexamer acts as an ATP-dependent pump, pulling dsDNA into and through the RuvAB complex. HJ branch migration allows RuvC to scan DNA until it finds its consensus sequence, where it cleaves and resolves the cruciform DNA. In Acinetobacter baumannii (strain AB307-0294), this protein is Holliday junction branch migration complex subunit RuvA.